Reading from the N-terminus, the 211-residue chain is Uridine kinase (211 aa).

ATP is bound at residue 12–19; that stretch reads GGSGSGKT.

Belongs to the uridine kinase family.

It is found in the cytoplasm. The enzyme catalyses uridine + ATP = UMP + ADP + H(+). It catalyses the reaction cytidine + ATP = CMP + ADP + H(+). It participates in pyrimidine metabolism; CTP biosynthesis via salvage pathway; CTP from cytidine: step 1/3. It functions in the pathway pyrimidine metabolism; UMP biosynthesis via salvage pathway; UMP from uridine: step 1/1. The protein is Uridine kinase of Anoxybacillus flavithermus (strain DSM 21510 / WK1).